A 566-amino-acid polypeptide reads, in one-letter code: Malate synthase, glyoxysomal (566 aa).

The active-site Proton acceptor is the R182. D467 serves as the catalytic Proton donor. Positions S564 to L566 match the Microbody targeting signal motif.

Belongs to the malate synthase family.

The protein resides in the glyoxysome. It catalyses the reaction glyoxylate + acetyl-CoA + H2O = (S)-malate + CoA + H(+). Its pathway is carbohydrate metabolism; glyoxylate cycle; (S)-malate from isocitrate: step 2/2. The polypeptide is Malate synthase, glyoxysomal (Cucurbita maxima (Pumpkin)).